We begin with the raw amino-acid sequence, 357 residues long: Peptide chain release factor 1 (357 aa).

Q232 carries the post-translational modification N5-methylglutamine.

This sequence belongs to the prokaryotic/mitochondrial release factor family. In terms of processing, methylated by PrmC. Methylation increases the termination efficiency of RF1.

It localises to the cytoplasm. In terms of biological role, peptide chain release factor 1 directs the termination of translation in response to the peptide chain termination codons UAG and UAA. The sequence is that of Peptide chain release factor 1 from Maridesulfovibrio salexigens (strain ATCC 14822 / DSM 2638 / NCIMB 8403 / VKM B-1763) (Desulfovibrio salexigens).